A 361-amino-acid chain; its full sequence is Peptide chain release factor 1 (361 aa).

Q235 carries the post-translational modification N5-methylglutamine.

Belongs to the prokaryotic/mitochondrial release factor family. Post-translationally, methylated by PrmC. Methylation increases the termination efficiency of RF1.

The protein resides in the cytoplasm. Its function is as follows. Peptide chain release factor 1 directs the termination of translation in response to the peptide chain termination codons UAG and UAA. This is Peptide chain release factor 1 from Rhodopseudomonas palustris (strain BisB18).